The chain runs to 145 residues: Immunoglobulin iota chain (145 aa).

The first 19 residues, 1-19, serve as a signal peptide directing secretion; the sequence is MSWAPVLLMLFVYCTGCGP. The tract at residues 20–41 is framework-1; it reads QPVLHQPPAMSSALGTTIRLTC. Positions 20–132 constitute an Ig-like V-type domain; sequence QPVLHQPPAM…EKEEREREWE (113 aa). An intrachain disulfide couples cysteine 41 to cysteine 115. The tract at residues 42-56 is complementarity-determining-1; the sequence is TLRNDHDIGVYSVYW. A framework-2 region spans residues 57 to 70; that stretch reads YQQRPGHPPRFLLR. Residues 71-81 form a complementarity-determining-2 region; sequence YFSQSDKSQGP. The framework-3 stretch occupies residues 82-115; sequence QVPPRFSGSKDVARNRGYLSISELQPEDEAMYYC. A compositionally biased stretch (basic and acidic residues) spans 121–130; that stretch reads SSEKEERERE. Residues 121 to 145 form a disordered region; that stretch reads SSEKEEREREWEEEMEPTAARTRVP.

The protein belongs to the immunoglobulin superfamily. In terms of assembly, interacts with IGLL1. Interacts with SYNV1/HRD1 (via N-terminus); this interaction leads to increased VPREB1 ubiquitination and degradation in pre-B cells, possibly through a lysosomal, not proteasomal, pathway. Only expressed by pre-B-cells.

It is found in the endoplasmic reticulum. Associates with the Ig-mu chain to form a molecular complex that is expressed on the surface of pre-B-cells. This complex presumably regulates Ig gene rearrangements in the early steps of B-cell differentiation. The sequence is that of Immunoglobulin iota chain (VPREB1) from Homo sapiens (Human).